The primary structure comprises 150 residues: D-aminoacyl-tRNA deacylase (150 aa).

The Gly-cisPro motif, important for rejection of L-amino acids motif lies at G136–P137.

It belongs to the DTD family. In terms of assembly, homodimer.

It localises to the cytoplasm. The catalysed reaction is glycyl-tRNA(Ala) + H2O = tRNA(Ala) + glycine + H(+). It carries out the reaction a D-aminoacyl-tRNA + H2O = a tRNA + a D-alpha-amino acid + H(+). Functionally, an aminoacyl-tRNA editing enzyme that deacylates mischarged D-aminoacyl-tRNAs. Also deacylates mischarged glycyl-tRNA(Ala), protecting cells against glycine mischarging by AlaRS. Acts via tRNA-based rather than protein-based catalysis; rejects L-amino acids rather than detecting D-amino acids in the active site. By recycling D-aminoacyl-tRNA to D-amino acids and free tRNA molecules, this enzyme counteracts the toxicity associated with the formation of D-aminoacyl-tRNA entities in vivo and helps enforce protein L-homochirality. This Staphylococcus aureus (strain bovine RF122 / ET3-1) protein is D-aminoacyl-tRNA deacylase.